The chain runs to 377 residues: tRNA-specific 2-thiouridylase MnmA (377 aa).

ATP is bound by residues 8–15 (GMSGGVDS) and Met34. An interaction with target base in tRNA region spans residues 94-96 (NPD). Cys99 serves as the catalytic Nucleophile. Residues Cys99 and Cys201 are joined by a disulfide bond. Position 123 (Gly123) interacts with ATP. The tract at residues 151-153 (KDQ) is interaction with tRNA. Cys201 acts as the Cysteine persulfide intermediate in catalysis. Positions 315 to 316 (RY) are interaction with tRNA.

The protein belongs to the MnmA/TRMU family.

The protein localises to the cytoplasm. It catalyses the reaction S-sulfanyl-L-cysteinyl-[protein] + uridine(34) in tRNA + AH2 + ATP = 2-thiouridine(34) in tRNA + L-cysteinyl-[protein] + A + AMP + diphosphate + H(+). Its function is as follows. Catalyzes the 2-thiolation of uridine at the wobble position (U34) of tRNA, leading to the formation of s(2)U34. The chain is tRNA-specific 2-thiouridylase MnmA from Acinetobacter baumannii (strain AB307-0294).